We begin with the raw amino-acid sequence, 475 residues long: Ribulose bisphosphate carboxylase large chain (475 aa).

Positions 1 to 2 are excised as a propeptide; sequence MS. Pro-3 carries the post-translational modification N-acetylproline. An N6,N6,N6-trimethyllysine modification is found at Lys-14. Positions 123 and 173 each coordinate substrate. Lys-175 serves as the catalytic Proton acceptor. Lys-177 serves as a coordination point for substrate. Lys-201, Asp-203, and Glu-204 together coordinate Mg(2+). Position 201 is an N6-carboxylysine (Lys-201). His-294 serves as the catalytic Proton acceptor. Positions 295, 327, and 379 each coordinate substrate.

The protein belongs to the RuBisCO large chain family. Type I subfamily. In terms of assembly, heterohexadecamer of 8 large chains and 8 small chains; disulfide-linked. The disulfide link is formed within the large subunit homodimers. The cofactor is Mg(2+). The disulfide bond which can form in the large chain dimeric partners within the hexadecamer appears to be associated with oxidative stress and protein turnover.

It is found in the plastid. The protein resides in the chloroplast. It carries out the reaction 2 (2R)-3-phosphoglycerate + 2 H(+) = D-ribulose 1,5-bisphosphate + CO2 + H2O. It catalyses the reaction D-ribulose 1,5-bisphosphate + O2 = 2-phosphoglycolate + (2R)-3-phosphoglycerate + 2 H(+). In terms of biological role, ruBisCO catalyzes two reactions: the carboxylation of D-ribulose 1,5-bisphosphate, the primary event in carbon dioxide fixation, as well as the oxidative fragmentation of the pentose substrate in the photorespiration process. Both reactions occur simultaneously and in competition at the same active site. This is Ribulose bisphosphate carboxylase large chain from Mesostigma viride (Green alga).